Here is a 74-residue protein sequence, read N- to C-terminus: Small ribosomal subunit protein bS18 (74 aa).

The protein belongs to the bacterial ribosomal protein bS18 family. In terms of assembly, part of the 30S ribosomal subunit. Forms a tight heterodimer with protein bS6.

Functionally, binds as a heterodimer with protein bS6 to the central domain of the 16S rRNA, where it helps stabilize the platform of the 30S subunit. The polypeptide is Small ribosomal subunit protein bS18 (Thioalkalivibrio sulfidiphilus (strain HL-EbGR7)).